The chain runs to 117 residues: Large ribosomal subunit protein bL19 (117 aa).

It belongs to the bacterial ribosomal protein bL19 family.

In terms of biological role, this protein is located at the 30S-50S ribosomal subunit interface and may play a role in the structure and function of the aminoacyl-tRNA binding site. This Methylibium petroleiphilum (strain ATCC BAA-1232 / LMG 22953 / PM1) protein is Large ribosomal subunit protein bL19.